We begin with the raw amino-acid sequence, 109 residues long: Probable sulredoxin (109 aa).

One can recognise a Rieske domain in the interval 3-107 (WKRTISAKAL…IRDNGGWIEV (105 aa)). [2Fe-2S] cluster is bound by residues C43, H45, C62, and H65.

This sequence belongs to the SDX family. [2Fe-2S] cluster is required as a cofactor.

It is found in the cytoplasm. This is Probable sulredoxin (sdx) from Saccharolobus solfataricus (strain ATCC 35092 / DSM 1617 / JCM 11322 / P2) (Sulfolobus solfataricus).